The following is a 235-amino-acid chain: Carbonic anhydrase 1 (235 aa).

In terms of domain architecture, Alpha-carbonic anhydrase spans 1–235; the sequence is GNKQSPVDIK…LKGRTVKASF (235 aa). Histidine 40 functions as the Proton donor/acceptor in the catalytic mechanism. Zn(2+) contacts are provided by histidine 69, histidine 71, and histidine 94. Residues threonine 174 and 174-175 each bind substrate; that span reads TH.

This sequence belongs to the alpha-carbonic anhydrase family. It depends on Zn(2+) as a cofactor.

It is found in the cytoplasm. It catalyses the reaction hydrogencarbonate + H(+) = CO2 + H2O. The catalysed reaction is urea = cyanamide + H2O. With respect to regulation, inhibited by acetazolamide. Its function is as follows. Catalyzes the reversible hydration of carbon dioxide. Can hydrate cyanamide to urea. In Oryctolagus cuniculus (Rabbit), this protein is Carbonic anhydrase 1 (CA1).